The following is a 283-amino-acid chain: D-alanine aminotransferase (283 aa).

Substrate is bound at residue Y31. R50 contributes to the pyridoxal 5'-phosphate binding site. Residues R98 and H100 each coordinate substrate. Residue K144 is the Proton acceptor of the active site. At K144 the chain carries N6-(pyridoxal phosphate)lysine. Position 176 (E176) interacts with pyridoxal 5'-phosphate.

It belongs to the class-IV pyridoxal-phosphate-dependent aminotransferase family. As to quaternary structure, homodimer. Pyridoxal 5'-phosphate is required as a cofactor.

It carries out the reaction D-alanine + 2-oxoglutarate = D-glutamate + pyruvate. Acts on the D-isomers of alanine, leucine, aspartate, glutamate, aminobutyrate, norvaline and asparagine. The enzyme transfers an amino group from a substrate D-amino acid to the pyridoxal phosphate cofactor to form pyridoxamine and an alpha-keto acid in the first half-reaction. The second half-reaction is the reverse of the first, transferring the amino group from the pyridoxamine to a second alpha-keto acid to form the product D-amino acid via a ping-pong mechanism. This is an important process in the formation of D-alanine and D-glutamate, which are essential bacterial cell wall components. This Bacillus licheniformis protein is D-alanine aminotransferase (dat).